A 204-amino-acid chain; its full sequence is ATP synthase subunit 4, mitochondrial (204 aa).

2 helical membrane passes run 27-47 and 52-72; these read GILA…LYVV and ILLV…APLY.

In terms of assembly, F-type ATP synthases have 2 components, the catalytic core F(1) and the membrane-embedded component F(0), linked together by a central stalk and a peripheral stalk. The central stalk, also called rotor shaft, is often seen as part of F(1). The peripheral stalk is seen as part of F(0). F(0) contains the membrane channel next to the rotor. F-type ATP synthases form dimers but each monomer functions independently in ATP generation. The dimer consists of 18 different polypeptides: ATP1 (subunit alpha, part of F(1), 3 molecules per monomer), ATP2 (subunit beta, part of F(1), 3 molecules per monomer), ATP3 (subunit gamma, part of the central stalk), ATP4 (subunit b, part of the peripheral stalk), ATP5/OSCP (subunit 5/OSCP, part of the peripheral stalk), ATP6 (subunit a, part of the peripheral stalk), ATP7 (subunit d, part of the peripheral stalk), ATP8 (subunit 8, part of the peripheral stalk), OLI1 (subunit c, part of the rotor, 10 molecules per monomer), ATP14 (subunit h, part of the peripheral stalk), ATP15 (subunit epsilon, part of the central stalk), ATP16 (subunit delta, part of the central stalk), ATP17 (subunit f, part of the peripheral stalk), ATP18 (subunit i/j, part of the peripheral stalk). Dimer-specific subunits are ATP19 (subunit k, at interface between monomers), ATP20 (subunit g, at interface between monomers), TIM11 (subunit e, at interface between monomers). Also contains subunit L.

It localises to the mitochondrion inner membrane. In terms of biological role, mitochondrial membrane ATP synthase (F(1)F(0) ATP synthase or Complex V) produces ATP from ADP in the presence of a proton gradient across the membrane which is generated by electron transport complexes of the respiratory chain. F-type ATP synthases consist of two structural domains, F(1) - containing the extramembraneous catalytic core, and F(0) - containing the membrane proton channel, linked together by a central stalk and a peripheral stalk. During catalysis, ATP synthesis in the catalytic domain of F(1) is coupled via a rotary mechanism of the central stalk subunits to proton translocation. Part of the complex F(0) domain and the peripheral stalk, which acts as a stator to hold the catalytic alpha/ATP1(3)beta/ATP2(3) subcomplex and subunit a/ATP6 static relative to the rotary elements. The protein is ATP synthase subunit 4, mitochondrial of Pichia angusta (Yeast).